The primary structure comprises 92 residues: MTRSLKKGPFVDHHLVAKADKAVTNKDKKPIKTWSRRSMILPEFIGLTIAVHNGKQHVPVYITDQMVGHKLGEFALTRTFKGHPADKKVVKK.

Belongs to the universal ribosomal protein uS19 family.

Functionally, protein S19 forms a complex with S13 that binds strongly to the 16S ribosomal RNA. This Polaromonas sp. (strain JS666 / ATCC BAA-500) protein is Small ribosomal subunit protein uS19.